The primary structure comprises 124 residues: Histone H2B 1/2 (124 aa).

Positions 1–32 are disordered; it reads MPEPAKAAPKKGSKKAVTKTAGKGGKKRKRTR. 2 positions are modified to N6-acetyllysine: Lys6 and Lys11. Residues 8 to 17 are compositionally biased toward basic residues; the sequence is APKKGSKKAV. Ser13 bears the Phosphoserine mark. Residues Lys14 and Lys19 each carry the N6-acetyllysine modification. Ser111 is a glycosylation site (O-linked (GlcNAc) serine). Lys119 is covalently cross-linked (Glycyl lysine isopeptide (Lys-Gly) (interchain with G-Cter in ubiquitin)).

It belongs to the histone H2B family. As to quaternary structure, the nucleosome is a histone octamer containing two molecules each of H2A, H2B, H3 and H4 assembled in one H3-H4 heterotetramer and two H2A-H2B heterodimers. The octamer wraps approximately 147 bp of DNA. Monoubiquitination of Lys-119 by the BRE1 gives a specific tag for epigenetic transcriptional activation and is also prerequisite for histone H3 'Lys-4' and 'Lys-79' methylation. Post-translationally, phosphorylated during apoptosis; which facilitates apoptotic chromatin condensation. In terms of processing, glcNAcylation at Ser-111 promotes monoubiquitination of Lys-119. It fluctuates in response to extracellular glucose, and associates with transcribed genes.

The protein localises to the nucleus. Its subcellular location is the chromosome. Core component of nucleosome. Nucleosomes wrap and compact DNA into chromatin, limiting DNA accessibility to the cellular machineries which require DNA as a template. Histones thereby play a central role in transcription regulation, DNA repair, DNA replication and chromosomal stability. DNA accessibility is regulated via a complex set of post-translational modifications of histones, also called histone code, and nucleosome remodeling. This Danio rerio (Zebrafish) protein is Histone H2B 1/2.